The chain runs to 430 residues: Elongation factor 1-gamma (430 aa).

The 83-residue stretch at valine 2–serine 84 folds into the GST N-terminal domain. In terms of domain architecture, GST C-terminal spans serine 85–phenylalanine 213. Basic and acidic residues-rich tracts occupy residues lysine 232 to glutamate 255 and proline 269 to methionine 278. Residues lysine 232–methionine 278 form a disordered region. An EF-1-gamma C-terminal domain is found at serine 271 to lysine 430.

As to quaternary structure, EF-1 is composed of four subunits: alpha, beta, delta, and gamma.

Functionally, probably plays a role in anchoring the complex to other cellular components. The polypeptide is Elongation factor 1-gamma (Artemia salina (Brine shrimp)).